The following is a 540-amino-acid chain: Chaperonin GroEL (540 aa).

Residues 29–32 (TLGP), 86–90 (DGTTT), Gly413, 476–478 (NAA), and Asp492 each bind ATP.

It belongs to the chaperonin (HSP60) family. In terms of assembly, forms a cylinder of 14 subunits composed of two heptameric rings stacked back-to-back. Interacts with the co-chaperonin GroES.

The protein localises to the cytoplasm. The catalysed reaction is ATP + H2O + a folded polypeptide = ADP + phosphate + an unfolded polypeptide.. In terms of biological role, together with its co-chaperonin GroES, plays an essential role in assisting protein folding. The GroEL-GroES system forms a nano-cage that allows encapsulation of the non-native substrate proteins and provides a physical environment optimized to promote and accelerate protein folding. This chain is Chaperonin GroEL, found in Streptococcus agalactiae serotype V (strain ATCC BAA-611 / 2603 V/R).